A 277-amino-acid chain; its full sequence is 3-methyl-2-oxobutanoate hydroxymethyltransferase (277 aa).

Mg(2+) is bound by residues Asp-53 and Asp-96. Residues Asp-53–Ser-54, Asp-96, and Lys-126 each bind 3-methyl-2-oxobutanoate. Residue Glu-128 coordinates Mg(2+). Glu-195 acts as the Proton acceptor in catalysis.

This sequence belongs to the PanB family. In terms of assembly, homodecamer; pentamer of dimers. Mg(2+) serves as cofactor.

Its subcellular location is the cytoplasm. The catalysed reaction is 3-methyl-2-oxobutanoate + (6R)-5,10-methylene-5,6,7,8-tetrahydrofolate + H2O = 2-dehydropantoate + (6S)-5,6,7,8-tetrahydrofolate. The protein operates within cofactor biosynthesis; (R)-pantothenate biosynthesis; (R)-pantoate from 3-methyl-2-oxobutanoate: step 1/2. Catalyzes the reversible reaction in which hydroxymethyl group from 5,10-methylenetetrahydrofolate is transferred onto alpha-ketoisovalerate to form ketopantoate. This Chlorobium phaeobacteroides (strain DSM 266 / SMG 266 / 2430) protein is 3-methyl-2-oxobutanoate hydroxymethyltransferase.